Here is a 381-residue protein sequence, read N- to C-terminus: Glycerophosphocholine acyltransferase 1 (381 aa).

Over 1–63 the chain is Cytoplasmic; it reads MANNEDSNSN…IAKQAEEHER (63 aa). The chain crosses the membrane as a helical span at residues 64–84; sequence FINKVTHLVGVLGFGGFCFLL. The Lumenal portion of the chain corresponds to 85-89; sequence GARPQ. The chain crosses the membrane as a helical span at residues 90 to 110; it reads DIPLVYCFFYVIFVPLRWIYY. Over 111 to 116 the chain is Cytoplasmic; that stretch reads RFKKWH. A helical membrane pass occupies residues 117-137; it reads YYLLDFCYYANTIFLVDLLLY. Residues 138-141 lie on the Lumenal side of the membrane; it reads PKNE. Residues 142–162 form a helical membrane-spanning segment; it reads KLFMVCFSFAEGPLAWAIIVW. Residues 163–173 are Cytoplasmic-facing; sequence RCSLVFSSPDK. A helical membrane pass occupies residues 174 to 194; that stretch reads IVSVLIHLLPGLVFFTIRWWN. Residues 195–223 lie on the Lumenal side of the membrane; sequence PATFAAMHPVGTDRRVSWPYVEDKAYLFT. Residues 224–244 traverse the membrane as a helical segment; the sequence is WLFLVPLVVYTLWQVLYFLIV. The Cytoplasmic segment spans residues 245–291; that stretch reads NVLRRQRLLRDPEVMTSYRELSKKAEKANNKLWQLSGLLGDQNRIWM. The chain crosses the membrane as a helical span at residues 292–312; that stretch reads YILFQAIFTVATMALTVPIFL. The Lumenal portion of the chain corresponds to 313 to 315; the sequence is SYR. A helical membrane pass occupies residues 316-336; sequence LHVIFQILKISAAVWNGGSFL. The Cytoplasmic portion of the chain corresponds to 337–381; that stretch reads LEVMPRQVIQKEKKKKAEMQPIEEQILHHEAVSHPTENEPKSTET.

Belongs to the GPC1 family.

The protein resides in the membrane. It carries out the reaction sn-glycerol 3-phosphocholine + an acyl-CoA = a 1-acyl-sn-glycero-3-phosphocholine + CoA. The enzyme catalyses sn-glycero-3-phosphoethanolamine + an acyl-CoA = a monoacyl-sn-glycero-3-phosphoethanolamine + CoA. The catalysed reaction is sn-glycerol 3-phosphocholine + (9Z)-octadecenoyl-CoA = (9Z-octadecenoyl)-sn-glycero-3-phosphocholine + CoA. Glycerophosphocholine acyltransferase (GPCAT) that utilizes acyl-CoA to acylate glycero-3-phosphocholine (GPC), forming lysophosphatidylcholine (LPC). Shows broad acyl specificities with a preference for 16:0-CoA, polyunsaturated acyl-CoA, and the hydroxylated ricinoleoyl-CoA. Also catalyzes the acylation of glycero-3-phosphoethanolamine (GPE) with acyl-CoA. In addition to acyl-CoA, GPCAT efficiently utilizes LPC and lysophosphatidylethanolamine (LPE) as acyl donors in the acylation of GPC. Contributes to the maintenance of phosphatidylcholine (PC) homeostasis and might also have specific functions in acyl editing of PC, such as transferring acyl groups modified at the sn-2 position of PC to the sn-1. This chain is Glycerophosphocholine acyltransferase 1, found in Arabidopsis thaliana (Mouse-ear cress).